We begin with the raw amino-acid sequence, 344 residues long: Uroporphyrinogen decarboxylase (344 aa).

Residues 29–33 (RQAGR), Asp79, Tyr153, Ser208, and His324 contribute to the substrate site.

This sequence belongs to the uroporphyrinogen decarboxylase family. Homodimer.

It is found in the cytoplasm. The catalysed reaction is uroporphyrinogen III + 4 H(+) = coproporphyrinogen III + 4 CO2. The protein operates within porphyrin-containing compound metabolism; protoporphyrin-IX biosynthesis; coproporphyrinogen-III from 5-aminolevulinate: step 4/4. Its function is as follows. Catalyzes the decarboxylation of four acetate groups of uroporphyrinogen-III to yield coproporphyrinogen-III. The polypeptide is Uroporphyrinogen decarboxylase (Rhizorhabdus wittichii (strain DSM 6014 / CCUG 31198 / JCM 15750 / NBRC 105917 / EY 4224 / RW1) (Sphingomonas wittichii)).